Here is a 434-residue protein sequence, read N- to C-terminus: MASYVIEGGNSLKGEILVQGAKNEALQIISATLLTDQEVVVRNIPDILDVNNLIDLLRNMGVKVKRPTRDTCVFQADNVNLDYIKSEQFLEKSRALRGSVLLVGPLISRFGYAIFPKPGGDKIGRRRLDTHLVGIQALGATCDYHSDMQAYELTASRLSGTYMLLDEASVTGTANILMAAVLADGITTIYNAACEPYLQQLCKMLLSMGAHIEGVGSNLLRIEGVQSLHGCEHKMLPDMIEVGSFIGMAAMTASELLIKDVSVPDLGIIPASFRRLGIAVEQQGDDLFIPKQEHYEIETFMDGSIMTIADAPWPGLTPDLLSVFLVVATQAKGSVLIHQKMFESRLFFVDKLIDMGAQIILCDPHRATIIGLDKRVPLRAATMVSPDIRAGIALLIAAMSAEGTSIIHNVEQIDRGYQSIDTRLNAIGARISRL.

22 to 23 is a binding site for phosphoenolpyruvate; it reads KN. Arginine 97 is a binding site for UDP-N-acetyl-alpha-D-glucosamine. Aspartate 121 (proton donor) is an active-site residue. Residues aspartate 319 and methionine 341 each contribute to the UDP-N-acetyl-alpha-D-glucosamine site.

It belongs to the EPSP synthase family. MurA subfamily.

The protein resides in the cytoplasm. It carries out the reaction phosphoenolpyruvate + UDP-N-acetyl-alpha-D-glucosamine = UDP-N-acetyl-3-O-(1-carboxyvinyl)-alpha-D-glucosamine + phosphate. The protein operates within cell wall biogenesis; peptidoglycan biosynthesis. Its function is as follows. Cell wall formation. Adds enolpyruvyl to UDP-N-acetylglucosamine. The polypeptide is UDP-N-acetylglucosamine 1-carboxyvinyltransferase (Porphyromonas gingivalis (strain ATCC BAA-308 / W83)).